We begin with the raw amino-acid sequence, 853 residues long: uncharacterized protein (853 aa).

Coiled-coil stretches lie at residues 313–343 and 480–528; these read RTDE…LKVA and EGQV…SELI.

This is an uncharacterized protein from Ostreid herpesvirus 1 (isolate France) (OsHV-1).